The following is a 391-amino-acid chain: RNA-binding motif protein, X chromosome (391 aa).

M1 bears the N-acetylmethionine; in Heterogeneous nuclear ribonucleoprotein G; alternate mark. V2 bears the N-acetylvaline; in Heterogeneous nuclear ribonucleoprotein G, N-terminally processed mark. Residues 8–86 (GKLFIGGLNT…KAIKVEQATK (79 aa)) form the RRM domain. Residue K22 forms a Glycyl lysine isopeptide (Lys-Gly) (interchain with G-Cter in SUMO2) linkage. An N6-acetyllysine modification is found at K30. The span at 61–80 (DAKDAARDMNGKSLDGKAIK) shows a compositional bias: basic and acidic residues. A disordered region spans residues 61–391 (DAKDAARDMN…SDRGGGRSRY (331 aa)). Residues K80 and K86 each participate in a glycyl lysine isopeptide (Lys-Gly) (interchain with G-Cter in SUMO2) cross-link. A phosphoserine mark is found at S88 and S91. Positions 109–120 (LRGGRGGSGGTR) are enriched in gly residues. An omega-N-methylarginine mark is found at R125, R144, and R164. Positions 151 to 164 (RGPPPRSGGPPPKR) are enriched in pro residues. The residue at position 165 (S165) is a Phosphoserine. R172 carries the omega-N-methylarginine modification. At S174 the chain carries Phosphoserine. The necessary for the association to nascent RNAPII transcripts and nuclear localization stretch occupies residues 186–236 (GRDSYGGPPRREPLPSRRDVYLSPRDDGYSTKDSYSSRDYPSSRDTRDYAP). 2 stretches are compositionally biased toward basic and acidic residues: residues 194–215 (PRREPLPSRRDVYLSPRDDGYS) and 241–274 (YTYRDYGHSSSRDDYPSRGYSDRDGYGRDRDYSD). 5 positions are modified to phosphoserine: S261, S328, S329, S330, and S332. Low complexity predominate over residues 323 to 337 (SRDSYSSSRSDLYSS). The segment at 333–391 (DLYSSGRDRVGRQDRGLPPSMERGYPPPRDSYSSSSRGAPRGGGRGGSRSDRGGGRSRY) is necessary for RNA-binding. Positions 338-347 (GRDRVGRQDR) are enriched in basic and acidic residues. Position 352 is a phosphoserine (S352). The segment covering 362–371 (DSYSSSSRGA) has biased composition (low complexity). Over residues 380–391 (SRSDRGGGRSRY) the composition is skewed to basic and acidic residues.

Homomultimer. Found in the supraspliceosome complex. Identified in the spliceosome C complex. Forms a complex with ILF2, ILF3, YLPM1, KHDRBS1, NCOA5 and PPP1CA. Interacts with CLK2, KHDRBS2, KHDRBS3, SAFB/SAFB1, TRA2B and YTHDC1. Interacts with ERAP1; the interaction is RNA-independent. Interacts with PPIA/CYPA. In terms of processing, O-glycosylated. Arg-185 is dimethylated, probably to asymmetric dimethylarginine.

Its subcellular location is the nucleus. RNA-binding protein that plays several role in the regulation of pre- and post-transcriptional processes. Implicated in tissue-specific regulation of gene transcription and alternative splicing of several pre-mRNAs. Binds to and stimulates transcription from the tumor suppressor TXNIP gene promoter; may thus be involved in tumor suppression. When associated with SAFB, binds to and stimulates transcription from the SREBF1 promoter. Associates with nascent mRNAs transcribed by RNA polymerase II. Component of the supraspliceosome complex that regulates pre-mRNA alternative splice site selection. Can either activate or suppress exon inclusion; acts additively with TRA2B to promote exon 7 inclusion of the survival motor neuron SMN. Represses the splicing of MAPT/Tau exon 10. Binds preferentially to single-stranded 5'-CC[A/C]-rich RNA sequence motifs localized in a single-stranded conformation; probably binds RNA as a homodimer. Binds non-specifically to pre-mRNAs. Also plays a role in the cytoplasmic TNFR1 trafficking pathways; promotes both the IL-1-beta-mediated inducible proteolytic cleavage of TNFR1 ectodomains and the release of TNFR1 exosome-like vesicles to the extracellular compartment. The protein is RNA-binding motif protein, X chromosome (RBMX) of Macaca fascicularis (Crab-eating macaque).